The primary structure comprises 1874 residues: WD repeat-containing protein 90 (1874 aa).

The interval 1-59 (MAGGSGARETRCRQGSRPGSPGSEVPAASVTGPRAEARPAGGGGGSRRAAPDRCSGGVP) is disordered. Phosphoserine occurs at positions 16 and 20. A binds with microtubules region spans residues 59–267 (PSAAWQHPFL…VNPMPREMAF (209 aa)). Ser301 carries the phosphoserine modification. WD repeat units follow at residues 469 to 512 (GHTD…SLFR), 514 to 556 (PLHT…LGGE), 563 to 603 (VHTD…LRSC), 677 to 716 (SVGS…VLLE), 718 to 757 (EHDG…YTVL), 760 to 799 (SHMA…QLYD), 844 to 883 (RHRG…CCVL), 944 to 984 (NHLD…TLRE), 988 to 1026 (VRSR…NPSC), and 1031 to 1068 (GHSE…ERDG). Residues 1066–1075 (RDGGDHEAPP) show a composition bias toward basic and acidic residues. Disordered stretches follow at residues 1066–1132 (RDGG…SDEE) and 1160–1211 (ASGA…HFTP). 11 WD repeats span residues 1280-1325 (GHSQ…CRHL), 1328-1369 (HHDT…LLSS), 1371-1412 (RLLE…TCFQ), 1422-1460 (LGAS…CFLA), 1462-1500 (EADD…ELRR), 1559-1598 (GHRT…LVIQ), 1601-1646 (VLNQ…MELK), 1649-1688 (PHRT…TFRV), 1695-1740 (APIS…DRCE), 1800-1839 (PLPF…AQDL), and 1841-1874 (GHDD…VTDP).

The protein belongs to the WD repeat WDR90/POC16 family.

The protein localises to the cytoplasm. Its subcellular location is the cytoskeleton. It localises to the microtubule organizing center. The protein resides in the centrosome. It is found in the centriole. The protein localises to the centriolar satellite. Its function is as follows. Microtubule-binding protein that plays a crucial role in ensuring inner core protein localization within the centriole core, as well as in maintaining the microtubule wall integrity and the overall centriole roundness and stability. Required for efficient primary cilium formation. The chain is WD repeat-containing protein 90 (Wdr90) from Mus musculus (Mouse).